The chain runs to 232 residues: ATP-dependent Clp protease proteolytic subunit 2 (232 aa).

The active-site Nucleophile is the serine 124. Histidine 149 is an active-site residue.

This sequence belongs to the peptidase S14 family. Fourteen ClpP subunits assemble into 2 heptameric rings which stack back to back to give a disk-like structure with a central cavity, resembling the structure of eukaryotic proteasomes.

It is found in the cytoplasm. The enzyme catalyses Hydrolysis of proteins to small peptides in the presence of ATP and magnesium. alpha-casein is the usual test substrate. In the absence of ATP, only oligopeptides shorter than five residues are hydrolyzed (such as succinyl-Leu-Tyr-|-NHMec, and Leu-Tyr-Leu-|-Tyr-Trp, in which cleavage of the -Tyr-|-Leu- and -Tyr-|-Trp bonds also occurs).. Functionally, cleaves peptides in various proteins in a process that requires ATP hydrolysis. Has a chymotrypsin-like activity. Plays a major role in the degradation of misfolded proteins. This chain is ATP-dependent Clp protease proteolytic subunit 2, found in Nostoc sp. (strain PCC 7120 / SAG 25.82 / UTEX 2576).